Here is a 180-residue protein sequence, read N- to C-terminus: Symerythrin (180 aa).

The 3-(L-phenylalan-2'-yl)-L-valine (Phe-Val) cross-link spans 17 to 127 (FQDAVSHNNT…RRALETALEV (111 aa)). The Ferritin-like diiron domain occupies 21–180 (VSHNNTDANA…RALENLLEVA (160 aa)). Fe(3+) contacts are provided by E37, E40, E71, E128, E131, E162, and H165.

Monomer. It depends on Fe(3+) as a cofactor.

The protein localises to the plastid. It is found in the cyanelle. Exhibits oxidase-like and peroxidase-like activities in vitro. This is Symerythrin from Cyanophora paradoxa.